Here is a 261-residue protein sequence, read N- to C-terminus: Zaragozic acid A biosynthesis cluster protein 8 (261 aa).

The segment covering 242–254 (GTRSHTPAATQRR) has biased composition (polar residues). The segment at 242–261 (GTRSHTPAATQRRGQGRGCG) is disordered.

It functions in the pathway secondary metabolite biosynthesis. Functionally, part of the gene cluster that mediates the biosynthesis of squalestatin S1 (SQS1, also known as zaragozic acid A), a heavily oxidized fungal polyketide that offers potent cholesterol lowering activity by targeting squalene synthase (SS). SQS1 is composed of a 2,8-dioxobicyclic[3.2.1]octane-3,4,5-tricarboxyclic acid core that is connected to two lipophilic polyketide arms. These initial steps feature the priming of an unusual benzoic acid starter unit onto the highly reducing polyketide synthase clz14, followed by oxaloacetate extension and product release to generate a tricarboxylic acid containing product. The phenylalanine ammonia lyase (PAL) clz10 and the acyl-CoA ligase clz12 are involved in transforming phenylalanine into benzoyl-CoA. The citrate synthase-like protein clz17 is involved in connecting the C-alpha-carbons of the hexaketide chain and oxaloacetate to afford the tricarboxylic acid unit. The potential hydrolytic enzymes, clz11 and clz13, are in close proximity to pks2 and may participate in product release. On the other side, the tetraketide arm is synthesized by a the squalestatin tetraketide synthase clz2 and enzymatically esterified to the core in the last biosynthetic step, by the acetyltransferase clz6. The biosynthesis of the tetraketide must involve 3 rounds of chain extension. After the first and second rounds methyl-transfer occurs, and in all rounds of extension the ketoreductase and dehydratase are active. The enoyl reductase and C-MeT of clz2 are not active in the final round of extension. The acetyltransferase clz6 appears to have a broad substrate selectivity for its acyl CoA substrate, allowing the in vitro synthesis of novel squalestatins. The biosynthesis of SQS1 requires several oxidative steps likely performed by oxidoreductases clz3, clz15 and clz16. Finally, in support of the identification of the cluster as being responsible for SQS1 production, the cluster contains a gene encoding a putative squalene synthase (SS) clz20, suggesting a likely mechanism for self-resistance. The sequence is that of Zaragozic acid A biosynthesis cluster protein 8 from Cochliobolus lunatus (Filamentous fungus).